A 145-amino-acid polypeptide reads, in one-letter code: Probable DNA-directed RNA polymerases I and III subunit RPAC2 (145 aa).

The disordered stretch occupies residues 1 to 52 (MGKKSEKKVVEETMEVDEQPAVEPEAVPEEEPEVEDEDLNVPKKKKMEILDP). Acidic residues predominate over residues 12–39 (ETMEVDEQPAVEPEAVPEEEPEVEDEDL).

This sequence belongs to the archaeal Rpo11/eukaryotic RPB11/RPC19 RNA polymerase subunit family. Component of the RNA polymerase I (Pol I) and RNA polymerase III (Pol III) complexes consisting of at least 13 and 17 subunits, respectively.

It localises to the nucleus. In terms of biological role, DNA-dependent RNA polymerase catalyzes the transcription of DNA into RNA using the four ribonucleoside triphosphates as substrates. Common core component of RNA polymerases I and III which synthesize ribosomal RNA precursors and small RNAs, such as 5S rRNA and tRNAs, respectively. This is Probable DNA-directed RNA polymerases I and III subunit RPAC2 (rpac-19) from Caenorhabditis briggsae.